A 122-amino-acid chain; its full sequence is Serum amyloid A-1 protein (122 aa).

The N-terminal stretch at 1–18 (MKPFVAIIFCFLILGVDS) is a signal peptide. The tract at residues 19–45 (QRWFQFMKEAGQGTRDMWRAYTDMREA) is important for amyloid formation. The interval 100–122 (ANEWGRSGKDPNFFRPPGLPSKY) is disordered.

The protein belongs to the SAA family. As to quaternary structure, homohexamer; dimer of trimers. Can form amyloid fibrils after partial proteolysis; the native, undenatured protein does not form amyloid fibrils (in vitro). Apolipoprotein of the HDL complex. Binds to heparin. As to expression, detected in liver, spleen and kidney.

It localises to the secreted. In terms of biological role, major acute phase protein. The protein is Serum amyloid A-1 protein (SAA1) of Mesocricetus auratus (Golden hamster).